The chain runs to 105 residues: Biogenesis of lysosome-related organelles complex 1 subunit SNN1 (105 aa).

Residues 70–105 (WKDDNERLDSLRKRVDSLKSRFQSLKLRSDKLEQRE) are a coiled coil.

It belongs to the SNAPIN family. Component of the biogenesis of lysosome-related organelles complex-1 (BLOC-1).

Its subcellular location is the endosome. Component of the biogenesis of lysosome-related organelles complex-1 (BLOC-1), a complex involved in endosomal cargo sorting. In Zygosaccharomyces rouxii (strain ATCC 2623 / CBS 732 / NBRC 1130 / NCYC 568 / NRRL Y-229), this protein is Biogenesis of lysosome-related organelles complex 1 subunit SNN1 (SNN1).